The primary structure comprises 32 residues: uncharacterized protein (32 aa).

Residues 3–23 (IGIIFPVVIFITAVVFLAWFF) traverse the membrane as a helical segment.

The protein resides in the cell inner membrane. This is an uncharacterized protein from Escherichia coli (strain K12).